A 470-amino-acid chain; its full sequence is Monocarboxylate transporter 4 (470 aa).

At 1–17 (MGGAVVDEGPTGIKAPD) the chain is on the cytoplasmic side. The helical transmembrane segment at 18-38 (GGWGWAVLFGCFIITGFSYAF) threads the bilayer. The Extracellular segment spans residues 39–61 (PKAVSVFFKELMHEFGIGYSDTA). Residues 62-82 (WISSILLAMLYGTGPLCSVCV) form a helical membrane-spanning segment. Residues 83 to 84 (NR) lie on the Cytoplasmic side of the membrane. The helical transmembrane segment at 85–105 (FGCRPVMLVGGLFASLGMVAA) threads the bilayer. Residues 106 to 109 (SFCR) lie on the Extracellular side of the membrane. The chain crosses the membrane as a helical span at residues 110–130 (SIIQIYLTTGVITGLGLALNF). Topologically, residues 131–149 (QPSLIMLNRYFNKRRPIAN) are cytoplasmic. The chain crosses the membrane as a helical span at residues 150 to 170 (GLAAAGSPVFLCALSPLGQLL). At 171–179 (QDHYGWRGG) the chain is on the extracellular side. A helical transmembrane segment spans residues 180–200 (FLILGGLLLNCCVCAALMRPL). Topologically, residues 201 to 231 (VAPQVGGGTEPRGPQRPPQRLLDLSVFRDRG) are cytoplasmic. A helical membrane pass occupies residues 232-252 (FLIYAVAASIMVLGLFVPPVF). Over 253-267 (VVSYAKDMGVPDTKA) the chain is Extracellular. A helical transmembrane segment spans residues 268-288 (AFLLTILGFIDIFARPTAGFI). Topologically, residues 289 to 298 (TGLKKVRPYS) are cytoplasmic. A helical transmembrane segment spans residues 299–319 (VYLFSFAMFFNGFTDLTGSTA). Over 320-321 (TD) the chain is Extracellular. The chain crosses the membrane as a helical span at residues 322–342 (YGGLVVFCIFFGISYGMVGAL). The Cytoplasmic segment spans residues 343-355 (QFEVLMAIVGTQK). The helical transmembrane segment at 356 to 376 (FSSAIGLVLLLEAVAVLIGPP) threads the bilayer. At 377 to 391 (SGGKLLDATKVYKYV) the chain is on the extracellular side. Residues 392-412 (FILAGAEVLTSSLVLLLGNFF) form a helical membrane-spanning segment. The Cytoplasmic portion of the chain corresponds to 413-470 (CIGKRKRPEVTEPEEVASEEKLHKPPVDVGVDSREVEHFLKAEPEKNGEVVHTPETSV). 2 basolateral sorting signal regions span residues 429-446 (ASEEKLHKPPVDVGVDSR) and 446-470 (REVEHFLKAEPEKNGEVVHTPETSV). Ser430 carries the phosphoserine modification. Thr465 is subject to Phosphothreonine. Ser469 carries the post-translational modification Phosphoserine.

This sequence belongs to the major facilitator superfamily. Monocarboxylate porter (TC 2.A.1.13) family. Interacts with BSG; interaction mediates SLC16A3 targeting to the plasma membrane.

It localises to the cell membrane. Its subcellular location is the basolateral cell membrane. It carries out the reaction (S)-lactate(in) + H(+)(in) = (S)-lactate(out) + H(+)(out). The enzyme catalyses pyruvate(out) + H(+)(out) = pyruvate(in) + H(+)(in). Its function is as follows. Proton-dependent transporter of monocarboxylates such as L-lactate and pyruvate. Plays a predominant role in the L-lactate efflux from highly glycolytic cells. The polypeptide is Monocarboxylate transporter 4 (Slc16a3) (Mus musculus (Mouse)).